A 182-amino-acid polypeptide reads, in one-letter code: Cbp/p300-interacting transactivator 4 (182 aa).

The segment at 22-129 (GPHAPRTLQP…PPPPPPALGC (108 aa)) is disordered. A compositionally biased stretch (polar residues) spans 64–89 (SPVSFQPFPVSQSPGAGSTHLQSAAT). Low complexity predominate over residues 100-117 (AAAGGPSPLQPAPGAAAS).

Belongs to the CITED family. As to quaternary structure, interacts via its C-terminal region with the CH1 domain of CREBBP and EP300. Interacts with all TFAP2/AP-2 isoforms. In terms of tissue distribution, strongly expressed in heart, spleen and testis, and weakly in liver and kidney.

The protein localises to the nucleus. It is found in the cytoplasm. Acts as a transcriptional coactivator for TFAP2/AP-2. Enhances estrogen-dependent transactivation mediated by estrogen receptors. May function as an inhibitor of transactivation by HIF1A by disrupting HIF1A interaction with CREBBP. May be involved in regulation of gene expression during development and differentiation of blood cells, endothelial cells and mammary epithelial cells. The protein is Cbp/p300-interacting transactivator 4 of Mus musculus (Mouse).